Reading from the N-terminus, the 292-residue chain is Tetratricopeptide repeat protein 1 (292 aa).

Positions 20-125 are disordered; it reads TDPQEAECLH…SSRLKEEGNE (106 aa). Composition is skewed to basic and acidic residues over residues 36–49 and 75–85; these read KEQH…KDVD and GADKLENKPED. Over residues 86–98 the composition is skewed to acidic residues; that stretch reads DMNPSELDEEYLM. Ser-90 carries the phosphoserine modification. Positions 99-125 are enriched in basic and acidic residues; it reads ELEKNMPDEEKKRRREESSRLKEEGNE. TPR repeat units lie at residues 116 to 149, 155 to 188, and 189 to 222; these read SSRL…CPSC, SVLF…NPSY, and IRAI…DPSV.

Interacts with the GAP domain of NF1. Interacts (via TPR repeats) with HSP90AA1 and HSPA8.

The chain is Tetratricopeptide repeat protein 1 (TTC1) from Bos taurus (Bovine).